The chain runs to 227 residues: Potassium/proton antiporter CemA (227 aa).

The next 4 membrane-spanning stretches (helical) occupy residues 5 to 25, 112 to 132, 143 to 163, and 187 to 207; these read SISL…SFTF, IICF…LILI, LSDT…IGFH, and IISG…KYWI.

This sequence belongs to the CemA family.

The protein resides in the plastid. The protein localises to the chloroplast inner membrane. The enzyme catalyses K(+)(in) + H(+)(out) = K(+)(out) + H(+)(in). Contributes to K(+)/H(+) antiport activity by supporting proton efflux to control proton extrusion and homeostasis in chloroplasts in a light-dependent manner to modulate photosynthesis. Prevents excessive induction of non-photochemical quenching (NPQ) under continuous-light conditions. Indirectly promotes efficient inorganic carbon uptake into chloroplasts. The chain is Potassium/proton antiporter CemA from Phaseolus vulgaris (Kidney bean).